Reading from the N-terminus, the 283-residue chain is MEQKIVNIGDIQVANDKPFTLFAGMNVLESRDLAMQICEHYVKVTDKLGIPYVFKASFDKANRSSVHSYRGPGLEEGMKIFQELKDTFGVKIITDVHTEAQAQPVADVVDVIQLPAFLARQTDLVEAMAKTGAVINVKKPQFMSPGQVGNIVEKFAECGNENIILCERGSCMGYDNLVVDMLGFGVMKNASKGSPIIFDVTHSLQMRDPSGAASGGRREQTVELAKAGLATGIAGLFIEAHPNPDQARCDGPSALPLDKLEPFLAQMKSLDDLIKSFADIDIK.

The protein belongs to the KdsA family.

It localises to the cytoplasm. The enzyme catalyses D-arabinose 5-phosphate + phosphoenolpyruvate + H2O = 3-deoxy-alpha-D-manno-2-octulosonate-8-phosphate + phosphate. It functions in the pathway carbohydrate biosynthesis; 3-deoxy-D-manno-octulosonate biosynthesis; 3-deoxy-D-manno-octulosonate from D-ribulose 5-phosphate: step 2/3. The protein operates within bacterial outer membrane biogenesis; lipopolysaccharide biosynthesis. The sequence is that of 2-dehydro-3-deoxyphosphooctonate aldolase from Vibrio campbellii (strain ATCC BAA-1116).